A 284-amino-acid polypeptide reads, in one-letter code: Undecaprenyl-diphosphatase (284 aa).

8 helical membrane-spanning segments follow: residues 1–21 (MNWLHAIILGIVEGITEFLPV), 43–63 (ITAFTAIIQVGAIIAAILYFW), 88–108 (YTLGWGIILGSIPVGVVGLVF), 116–136 (LSSLWVVAIALILWSGVMWLG), 149–169 (IGIVDAIVIGCFQALAPLFPG), 193–213 (LSFFMGIPALVAAGIYESVSA), 225–245 (VAIGWGPTILATVVSLIVAYV), and 259–279 (FTGFMWYRVVVGLIIIGLILS).

Belongs to the UppP family.

The protein localises to the cell membrane. The enzyme catalyses di-trans,octa-cis-undecaprenyl diphosphate + H2O = di-trans,octa-cis-undecaprenyl phosphate + phosphate + H(+). Catalyzes the dephosphorylation of undecaprenyl diphosphate (UPP). Confers resistance to bacitracin. In Cutibacterium acnes (strain DSM 16379 / KPA171202) (Propionibacterium acnes), this protein is Undecaprenyl-diphosphatase.